The primary structure comprises 1432 residues: DNA-directed RNA polymerase subunit beta (1432 aa).

Belongs to the RNA polymerase beta chain family. In terms of assembly, the RNAP catalytic core consists of 2 alpha, 1 beta, 1 beta' and 1 omega subunit. When a sigma factor is associated with the core the holoenzyme is formed, which can initiate transcription.

The catalysed reaction is RNA(n) + a ribonucleoside 5'-triphosphate = RNA(n+1) + diphosphate. Its function is as follows. DNA-dependent RNA polymerase catalyzes the transcription of DNA into RNA using the four ribonucleoside triphosphates as substrates. This chain is DNA-directed RNA polymerase subunit beta, found in Solibacter usitatus (strain Ellin6076).